A 172-amino-acid chain; its full sequence is Large ribosomal subunit protein uL10 (172 aa).

The protein belongs to the universal ribosomal protein uL10 family. As to quaternary structure, part of the ribosomal stalk of the 50S ribosomal subunit. The N-terminus interacts with L11 and the large rRNA to form the base of the stalk. The C-terminus forms an elongated spine to which L12 dimers bind in a sequential fashion forming a multimeric L10(L12)X complex.

Functionally, forms part of the ribosomal stalk, playing a central role in the interaction of the ribosome with GTP-bound translation factors. The sequence is that of Large ribosomal subunit protein uL10 from Bartonella bacilliformis (strain ATCC 35685 / KC583 / Herrer 020/F12,63).